We begin with the raw amino-acid sequence, 138 residues long: Small ribosomal subunit protein uS11c (138 aa).

A disordered region spans residues 1–23 (MAKPIQRIGSRRNGPIGSRKNGR).

The protein belongs to the universal ribosomal protein uS11 family. Part of the 30S ribosomal subunit.

It localises to the plastid. The protein localises to the chloroplast. In Platanus occidentalis (Sycamore), this protein is Small ribosomal subunit protein uS11c.